A 320-amino-acid chain; its full sequence is MDLSAIYESLMSMSHDLSPDHGGTESSGGLWNINSSDSIPSGVTSRLTGRSTSLVEGRSCSWVPPPPGFAPLAPRPGPELSPSPTSPTATPTTSSRYKTELCRTYSESGRCRYGAKCQFAHGPGELRQANRHPKYKTELCHKFYLQGRCPYGSRCHFIHNPTEDLALPGQPHVLRQSISFSGLPSGRRTSPPPPGFSGPSLSSCSFSPSSSPPPPGDLPLSPSAFSAAPGTPVSRRDPTPACCPSCRRSTTPSTIWGPLGGLARSPSAHSLGSDPDDYASSGSSLGGSDSPVFEAGVFGPPQPPAPPRRLPIFNRISVSE.

Residues 1 to 15 (MDLSAIYESLMSMSH) form a necessary for nuclear export region. The interval 1–93 (MDLSAIYESL…PTSPTATPTT (93 aa)) is necessary and sufficient for the association with mRNA decay enzymes and mRNA decay activation. 2 necessary for localization of ARE-containing mRNAs to processing bodies (PBs) regions span residues 1–167 (MDLS…DLAL) and 93–320 (TSSR…SVSE). Positions 17–50 (LSPDHGGTESSGGLWNINSSDSIPSGVTSRLTGR) are disordered. Residues 27–50 (SGGLWNINSSDSIPSGVTSRLTGR) show a composition bias toward polar residues. Position 53 is a phosphoserine; by MAPKAPK2 (S53). S59 carries the phosphoserine modification. The stretch at 64–68 (PPPPG) is one P-P-P-P-G repeat. Positions 66–85 (PPGFAPLAPRPGPELSPSPT) are enriched in pro residues. Residues 66-95 (PPGFAPLAPRPGPELSPSPTSPTATPTTSS) are disordered. 2 positions are modified to phosphoserine: S81 and S83. Phosphothreonine is present on T85. The residue at position 86 (S86) is a Phosphoserine. Low complexity predominate over residues 86–95 (SPTATPTTSS). Residues 88–161 (TATPTTSSRY…GSRCHFIHNP (74 aa)) form a necessary for nuclear localization region. The interval 90-166 (TPTTSSRYKT…FIHNPTEDLA (77 aa)) is necessary for RNA-binding. 2 C3H1-type zinc fingers span residues 96–124 (RYKTELCRTYSESGRCRYGAKCQFAHGPG) and 134–162 (KYKTELCHKFYLQGRCPYGSRCHFIHNPT). The necessary for interaction with PABPN1 stretch occupies residues 96–187 (RYKTELCRTY…ISFSGLPSGR (92 aa)). The tract at residues 167 to 320 (LPGQPHVLRQ…PIFNRISVSE (154 aa)) is necessary for mRNA decay activation. S179 is subject to Phosphoserine; by MAPKAPK2. Residues 180–310 (FSGLPSGRRT…PQPPAPPRRL (131 aa)) are disordered. S190 bears the Phosphoserine mark. A P-P-P-P-G repeat occupies 191–195 (PPPPG). The span at 197 to 209 (SGPSLSSCSFSPS) shows a compositional bias: low complexity. Residue S211 is modified to Phosphoserine. Residues 212-216 (PPPPG) form a P-P-P-P-G repeat. S221 is modified (phosphoserine; by MAPK1; in vitro). At T251 the chain carries Phosphothreonine. A phosphoserine mark is found at S270 and S290. The span at 280 to 290 (SSGSSLGGSDS) shows a compositional bias: low complexity. The segment covering 300–309 (PPQPPAPPRR) has biased composition (pro residues). Positions 306–320 (PPRRLPIFNRISVSE) are interaction with CNOT1. S317 carries the post-translational modification Phosphoserine.

In terms of assembly, associates with cytoplasmic CCR4-NOT and PAN2-PAN3 deadenylase complexes to trigger ARE-containing mRNA deadenylation and decay processes. Part of a mRNA decay activation complex at least composed of poly(A)-specific exoribonucleases CNOT6, EXOSC2 and XRN1 and mRNA-decapping enzymes DCP1A and DCP2. Associates with the RNA exosome complex. Interacts (via phosphorylated form) with 14-3-3 proteins; these interactions promote exclusion of ZFP36 from cytoplasmic stress granules in response to arsenite treatment in a MAPKAPK2-dependent manner and does not prevent CCR4-NOT deadenylase complex recruitment or ZFP36-induced ARE-containing mRNA deadenylation and decay processes. Interacts with 14-3-3 proteins; these interactions occur in response to rapamycin in an Akt-dependent manner. Interacts with AGO2 and AGO4. Interacts (via C-terminus) with CNOT1; this interaction occurs in a RNA-independent manner and induces mRNA deadenylation. Interacts (via N-terminus) with CNOT6. Interacts with CNOT6L. Interacts (via C-terminus) with CNOT7; this interaction occurs in a RNA-independent manner, induces mRNA deadenylation and is inhibited in a phosphorylation MAPKAPK2-dependent manner. Interacts (via unphosphorylated form) with CNOT8; this interaction occurs in a RNA-independent manner and is inhibited in a phosphorylation MAPKAPK2-dependent manner. Interacts with DCP1A. Interacts (via N-terminus) with DCP2. Interacts with EDC3. Interacts (via N-terminus) with EXOSC2. Interacts with heat shock 70 kDa proteins. Interacts with KHSRP; this interaction increases upon cytokine-induced treatment. Interacts with MAP3K4; this interaction enhances the association with SH3KBP1/CIN85. Interacts with MAPKAPK2; this interaction occurs upon skeletal muscle satellite cell activation. Interacts with NCL. Interacts with NUP214; this interaction increases upon lipopolysaccharide (LPS) stimulation. Interacts with PABPC1; this interaction occurs in a RNA-dependent manner. Interacts (via hypophosphorylated form) with PABPN1 (via RRM domain and C-terminal arginine-rich region); this interaction occurs in the nucleus in a RNA-independent manner, decreases in presence of single-stranded poly(A) RNA-oligomer and in a p38 MAPK-dependent-manner and inhibits nuclear poly(A) tail synthesis. Interacts with PAN2. Interacts (via C3H1-type zinc finger domains) with PKM. Interacts (via C3H1-type zinc finger domains) with nuclear RNA poly(A) polymerase. Interacts with PPP2CA; this interaction occurs in LPS-stimulated cells and induces ZFP36 dephosphorylation, and hence may promote ARE-containing mRNAs decay. Interacts (via C-terminus) with PRR5L (via C-terminus); this interaction may accelerate ZFP36-mediated mRNA decay during stress. Interacts (via C-terminus) with SFN; this interaction occurs in a phosphorylation-dependent manner. Interacts (via extreme C-terminal region) with SH3KBP1/CIN85 (via SH3 domains); this interaction enhances MAP3K4-induced phosphorylation of ZFP36 at Ser-59 and Ser-86 and does not alter neither ZFP36 binding to ARE-containing transcripts nor TNF-alpha mRNA decay. Interacts with XRN1. Interacts (via C-terminus and Ser-179 phosphorylated form) with YWHAB; this interaction occurs in a p38/MAPKAPK2-dependent manner, increases cytoplasmic localization of ZFP36 and protects ZFP36 from Ser-179 dephosphorylation by serine/threonine phosphatase 2A, and hence may be crucial for stabilizing ARE-containing mRNAs. Interacts (via phosphorylated form) with YWHAE. Interacts (via C-terminus) with YWHAG; this interaction occurs in a phosphorylation-dependent manner. Interacts with YWHAH; this interaction occurs in a phosphorylation-dependent manner. Interacts with YWHAQ; this interaction occurs in a phosphorylation-dependent manner. Interacts with (via C-terminus) YWHAZ; this interaction occurs in a phosphorylation-dependent manner. Does not interact with SH3KBP1. Interacts (via P-P-P-P-G repeats) with GIGYF2; the interaction is direct. Post-translationally, phosphorylated. Phosphorylation at serine and/or threonine residues occurs in a p38 MAPK- and MAPKAPK2-dependent manner. Phosphorylated by MAPKAPK2 at Ser-53 and Ser-179; phosphorylation increases its stability and cytoplasmic localization, promotes binding to 14-3-3 adapter proteins and inhibits the recruitment of cytoplasmic CCR4-NOT and PAN2-PAN3 deadenylase complexes to the mRNA decay machinery, thereby inhibiting ZFP36-induced ARE-containing mRNA deadenylation and decay processes. Phosphorylation by MAPKAPK2 does not impair ARE-containing RNA-binding. Phosphorylated in a MAPKAPK2- and p38 MAPK-dependent manner upon skeletal muscle satellite cell activation; this phosphorylation inhibits ZFP36-mediated mRNA decay activity, and hence stabilizes MYOD1 mRNA. Phosphorylated by MAPK1 upon mitogen stimulation. Phosphorylated at Ser-59 and Ser-86; these phosphorylations increase in a SH3KBP1-dependent manner. Phosphorylated at serine and threonine residues in a pyruvate kinase PKM- and p38 MAPK-dependent manner. Phosphorylation at Ser-53 may participate in the PKM-mediated degradation of ZFP36 in a p38 MAPK-dependent manner. Dephosphorylated by serine/threonine phosphatase 2A at Ser-179. Ubiquitinated; pyruvate kinase (PKM)-dependent ubiquitination leads to proteasomal degradation through a p38 MAPK signaling pathway.

It is found in the nucleus. It localises to the cytoplasm. The protein resides in the cytoplasmic granule. The protein localises to the P-body. Zinc-finger RNA-binding protein that destabilizes numerous cytoplasmic AU-rich element (ARE)-containing mRNA transcripts by promoting their poly(A) tail removal or deadenylation, and hence provide a mechanism for attenuating protein synthesis. Acts as an 3'-untranslated region (UTR) ARE mRNA-binding adapter protein to communicate signaling events to the mRNA decay machinery. Recruits deadenylase CNOT7 (and probably the CCR4-NOT complex) via association with CNOT1, and hence promotes ARE-mediated mRNA deadenylation. Also functions by recruiting components of the cytoplasmic RNA decay machinery to the bound ARE-containing mRNAs. Self regulates by destabilizing its own mRNA. Binds to 3'-UTR ARE of numerous mRNAs. Also binds to ARE of its own mRNA. Plays a role in anti-inflammatory responses; suppresses tumor necrosis factor (TNF)-alpha production by stimulating ARE-mediated TNF-alpha mRNA decay and several other inflammatory ARE-containing mRNAs in interferon (IFN)- and/or lipopolysaccharide (LPS)-induced macrophages. Also plays a role in the regulation of dendritic cell maturation at the post-transcriptional level, and hence operates as part of a negative feedback loop to limit the inflammatory response. Promotes ARE-mediated mRNA decay of hypoxia-inducible factor HIF1A mRNA during the response of endothelial cells to hypoxia. Positively regulates early adipogenesis of preadipocytes by promoting ARE-mediated mRNA decay of immediate early genes (IEGs). Negatively regulates hematopoietic/erythroid cell differentiation by promoting ARE-mediated mRNA decay of the transcription factor STAT5B mRNA. Plays a role in maintaining skeletal muscle satellite cell quiescence by promoting ARE-mediated mRNA decay of the myogenic determination factor MYOD1 mRNA. Also associates with and regulates the expression of non-ARE-containing target mRNAs at the post-transcriptional level, such as MHC class I mRNAs. Participates in association with argonaute RISC catalytic components in the ARE-mediated mRNA decay mechanism; assists microRNA (miRNA) targeting ARE-containing mRNAs. May also play a role in the regulation of cytoplasmic mRNA decapping; enhances decapping of ARE-containing RNAs, in vitro. Involved in the delivery of target ARE-mRNAs to processing bodies (PBs). In addition to its cytosolic mRNA-decay function, affects nuclear pre-mRNA processing. Negatively regulates nuclear poly(A)-binding protein PABPN1-stimulated polyadenylation activity on ARE-containing pre-mRNA during LPS-stimulated macrophages. Also involved in the regulation of stress granule (SG) and P-body (PB) formation and fusion. Plays a role in the regulation of keratinocyte proliferation, differentiation and apoptosis. Plays a role as a tumor suppressor by inhibiting cell proliferation in breast cancer cells. The protein is mRNA decay activator protein ZFP36 of Rattus norvegicus (Rat).